The sequence spans 268 residues: Thiazole synthase (268 aa).

K108 serves as the catalytic Schiff-base intermediate with DXP. Residues G169, 195–196 (AG), and 217–218 (NS) contribute to the 1-deoxy-D-xylulose 5-phosphate site. The segment at 248-268 (RLKENPLASPSSPLEGVISNN) is disordered. The segment covering 255–268 (ASPSSPLEGVISNN) has biased composition (polar residues).

It belongs to the ThiG family. As to quaternary structure, homotetramer. Forms heterodimers with either ThiH or ThiS.

Its subcellular location is the cytoplasm. It catalyses the reaction [ThiS sulfur-carrier protein]-C-terminal-Gly-aminoethanethioate + 2-iminoacetate + 1-deoxy-D-xylulose 5-phosphate = [ThiS sulfur-carrier protein]-C-terminal Gly-Gly + 2-[(2R,5Z)-2-carboxy-4-methylthiazol-5(2H)-ylidene]ethyl phosphate + 2 H2O + H(+). The protein operates within cofactor biosynthesis; thiamine diphosphate biosynthesis. Its function is as follows. Catalyzes the rearrangement of 1-deoxy-D-xylulose 5-phosphate (DXP) to produce the thiazole phosphate moiety of thiamine. Sulfur is provided by the thiocarboxylate moiety of the carrier protein ThiS. In vitro, sulfur can be provided by H(2)S. The polypeptide is Thiazole synthase (Prochlorococcus marinus (strain NATL1A)).